The chain runs to 45 residues: Photosystem II reaction center protein K (45 aa).

Residues 1-8 (MFSINFLG) constitute a propeptide that is removed on maturation. Residues 17–37 (FDPIVDVLPIIPLLFLLLAFV) form a helical membrane-spanning segment.

Belongs to the PsbK family. As to quaternary structure, PSII is composed of 1 copy each of membrane proteins PsbA, PsbB, PsbC, PsbD, PsbE, PsbF, PsbH, PsbI, PsbJ, PsbK, PsbL, PsbM, PsbT, PsbY, PsbZ, Psb30/Ycf12, at least 3 peripheral proteins of the oxygen-evolving complex and a large number of cofactors. It forms dimeric complexes.

The protein resides in the plastid. The protein localises to the chloroplast thylakoid membrane. One of the components of the core complex of photosystem II (PSII). PSII is a light-driven water:plastoquinone oxidoreductase that uses light energy to abstract electrons from H(2)O, generating O(2) and a proton gradient subsequently used for ATP formation. It consists of a core antenna complex that captures photons, and an electron transfer chain that converts photonic excitation into a charge separation. This is Photosystem II reaction center protein K from Euglena viridis (Cercaria viridis).